We begin with the raw amino-acid sequence, 58 residues long: Small ribosomal subunit protein bS21 (58 aa).

Belongs to the bacterial ribosomal protein bS21 family.

This chain is Small ribosomal subunit protein bS21, found in Latilactobacillus sakei subsp. sakei (strain 23K) (Lactobacillus sakei subsp. sakei).